A 365-amino-acid polypeptide reads, in one-letter code: Transmembrane protein 25 (365 aa).

The N-terminal stretch at 1–26 (MELPLSQATLRHTLLLLPALLSSGQG) is a signal peptide. Residues 27-232 (ELAPQIDGQT…APGLLATRIE (206 aa)) are Extracellular-facing. In terms of domain architecture, Ig-like spans 30 to 123 (PQIDGQTWAE…SGRPANASVI (94 aa)). C52 and C107 are joined by a disulfide. N106, N162, N192, and N205 each carry an N-linked (GlcNAc...) asparagine glycan. Residues 233–253 (VPLLGIVVAGGLALGTLVGFS) form a helical membrane-spanning segment. Residues 254–365 (TLVACLVCRK…SSVSSDEIWL (112 aa)) lie on the Cytoplasmic side of the membrane.

As to quaternary structure, interacts with GRIN2B. In terms of tissue distribution, expressed throughout the brain with higher levels within the hippocampus.

Its subcellular location is the late endosome. It localises to the lysosome. The protein resides in the cell membrane. It is found in the secreted. In terms of biological role, in neurons, modulates the degradation of NMDA receptor GRIN2B subunit. Plays a role in the regulation of neuronal excitability. The sequence is that of Transmembrane protein 25 from Mus musculus (Mouse).